A 204-amino-acid chain; its full sequence is N-(5'-phosphoribosyl)anthranilate isomerase (204 aa).

Belongs to the TrpF family.

The catalysed reaction is N-(5-phospho-beta-D-ribosyl)anthranilate = 1-(2-carboxyphenylamino)-1-deoxy-D-ribulose 5-phosphate. The protein operates within amino-acid biosynthesis; L-tryptophan biosynthesis; L-tryptophan from chorismate: step 3/5. This chain is N-(5'-phosphoribosyl)anthranilate isomerase, found in Oceanobacillus iheyensis (strain DSM 14371 / CIP 107618 / JCM 11309 / KCTC 3954 / HTE831).